Here is a 1274-residue protein sequence, read N- to C-terminus: Mediator of RNA polymerase II transcription subunit 14 (1274 aa).

Disordered stretches follow at residues 1-40 (MENG…KAHA), 1056-1142 (LVGT…LHTQ), and 1155-1274 (AQRQ…VVID). Positions 27-37 (AKREGSPDKGK) are enriched in basic and acidic residues. The segment covering 1075-1085 (QDLQQGPQKTP) has biased composition (polar residues). Over residues 1090-1104 (AAQAAQAAQAAQAAQ) the composition is skewed to low complexity. The span at 1108–1119 (PQRPKQQPPTPS) shows a compositional bias: pro residues. Low complexity-rich tracts occupy residues 1120–1142 (QPQQ…LHTQ), 1155–1172 (AQRQ…NNNT), and 1183–1252 (PQQR…PQGQ). Gly residues predominate over residues 1253–1265 (PGHGGGANGGMGG).

This sequence belongs to the Mediator complex subunit 14 family. In terms of assembly, component of the Mediator complex.

The protein localises to the nucleus. Its function is as follows. Component of the Mediator complex, a coactivator involved in the regulated transcription of nearly all RNA polymerase II-dependent genes. Mediator functions as a bridge to convey information from gene-specific regulatory proteins to the basal RNA polymerase II transcription machinery. Mediator is recruited to promoters by direct interactions with regulatory proteins and serves as a scaffold for the assembly of a functional preinitiation complex with RNA polymerase II and the general transcription factors. This is Mediator of RNA polymerase II transcription subunit 14 (rgr1) from Neurospora crassa (strain ATCC 24698 / 74-OR23-1A / CBS 708.71 / DSM 1257 / FGSC 987).